Here is a 261-residue protein sequence, read N- to C-terminus: Small ribosomal subunit protein eS1 (261 aa).

Over residues 1 to 18 the composition is skewed to basic residues; the sequence is MAVGKNKRISKGKKGGKK. Positions 1 to 22 are disordered; it reads MAVGKNKRISKGKKGGKKKAAD.

This sequence belongs to the eukaryotic ribosomal protein eS1 family. Component of the small ribosomal subunit. Mature ribosomes consist of a small (40S) and a large (60S) subunit. The 40S subunit contains about 33 different proteins and 1 molecule of RNA (18S). The 60S subunit contains about 49 different proteins and 3 molecules of RNA (25S, 5.8S and 5S).

Its subcellular location is the cytoplasm. In Cicer arietinum (Chickpea), this protein is Small ribosomal subunit protein eS1.